Here is a 796-residue protein sequence, read N- to C-terminus: Kinesin-like protein KIF3C (796 aa).

Residues 10–367 form the Kinesin motor domain; that stretch reads ALKVVARCRP…LRFANRAKNI (358 aa). An ATP-binding site is contributed by 97–104; the sequence is GQTGTGKT. Disordered stretches follow at residues 252 to 292, 397 to 422, and 758 to 796; these read RQNK…PKEA, EKKG…APAG, and KVRK…VDHD. A compositionally biased stretch (low complexity) spans 256–269; the sequence is AGPNAAGGPATQPT. Residues 378 to 632 are a coiled coil; that stretch reads KDTLLREFQE…NEQTRELKLK (255 aa). The segment covering 401 to 416 has biased composition (basic residues); the sequence is MLGKRPRRKSSRRKKA. Residues 633 to 793 form a globular region; it reads YLIIENFIPP…SVPLHPATVV (161 aa).

Belongs to the TRAFAC class myosin-kinesin ATPase superfamily. Kinesin family. Kinesin II subfamily. Heterodimer of KIF3A and KIF3C.

The protein resides in the cytoplasm. Its subcellular location is the cytoskeleton. Functionally, microtubule-based anterograde translocator for membranous organelles. The protein is Kinesin-like protein KIF3C (Kif3c) of Mus musculus (Mouse).